A 265-amino-acid polypeptide reads, in one-letter code: Undecaprenyl-diphosphatase (265 aa).

7 helical membrane-spanning segments follow: residues 38 to 58 (RSDF…CLAL), 75 to 95 (RDYV…GLIV), 108 to 128 (PVAW…HFAG), 135 to 155 (VVTW…GVFP), 181 to 201 (FVFM…LLEM), 215 to 235 (VAVA…WLLG), and 244 to 264 (VFAV…PAAA).

The protein belongs to the UppP family.

It is found in the cell inner membrane. The catalysed reaction is di-trans,octa-cis-undecaprenyl diphosphate + H2O = di-trans,octa-cis-undecaprenyl phosphate + phosphate + H(+). Catalyzes the dephosphorylation of undecaprenyl diphosphate (UPP). Confers resistance to bacitracin. This Xanthomonas axonopodis pv. citri (strain 306) protein is Undecaprenyl-diphosphatase.